The sequence spans 527 residues: Proline--tRNA ligase (527 aa).

The protein belongs to the class-II aminoacyl-tRNA synthetase family. ProS type 3 subfamily. As to quaternary structure, homodimer.

It localises to the cytoplasm. The catalysed reaction is tRNA(Pro) + L-proline + ATP = L-prolyl-tRNA(Pro) + AMP + diphosphate. Functionally, catalyzes the attachment of proline to tRNA(Pro) in a two-step reaction: proline is first activated by ATP to form Pro-AMP and then transferred to the acceptor end of tRNA(Pro). The chain is Proline--tRNA ligase from Sphingopyxis alaskensis (strain DSM 13593 / LMG 18877 / RB2256) (Sphingomonas alaskensis).